We begin with the raw amino-acid sequence, 124 residues long: Pal-related lipoprotein (124 aa).

The signal sequence occupies residues 1–18 (MRYRAVFPMLIIVFALSG). Cysteine 19 carries the N-palmitoyl cysteine lipid modification. Cysteine 19 is lipidated: S-diacylglycerol cysteine.

It localises to the cell membrane. This Bacillus subtilis (strain 168) protein is Pal-related lipoprotein (slp).